A 375-amino-acid chain; its full sequence is tRNA-specific 2-thiouridylase MnmA (375 aa).

Residues Gly12 to Ser19 and Met38 each bind ATP. Residues Asn98–Asp100 form an interaction with target base in tRNA region. The active-site Nucleophile is the Cys103. Residues Cys103 and Cys200 are joined by a disulfide bond. ATP is bound at residue Gly127. Residues Lys150 to Gln152 form an interaction with tRNA region. Cys200 serves as the catalytic Cysteine persulfide intermediate. The segment at Arg312–Tyr313 is interaction with tRNA.

The protein belongs to the MnmA/TRMU family.

It localises to the cytoplasm. The catalysed reaction is S-sulfanyl-L-cysteinyl-[protein] + uridine(34) in tRNA + AH2 + ATP = 2-thiouridine(34) in tRNA + L-cysteinyl-[protein] + A + AMP + diphosphate + H(+). In terms of biological role, catalyzes the 2-thiolation of uridine at the wobble position (U34) of tRNA, leading to the formation of s(2)U34. In Levilactobacillus brevis (strain ATCC 367 / BCRC 12310 / CIP 105137 / JCM 1170 / LMG 11437 / NCIMB 947 / NCTC 947) (Lactobacillus brevis), this protein is tRNA-specific 2-thiouridylase MnmA.